A 29-amino-acid chain; its full sequence is Cytochrome b6-f complex subunit 8 (29 aa).

The chain crosses the membrane as a helical span at residues 3-23 (TVSLAWAALMVVFTFSLSLVV).

Belongs to the PetN family. As to quaternary structure, the 4 large subunits of the cytochrome b6-f complex are cytochrome b6, subunit IV (17 kDa polypeptide, PetD), cytochrome f and the Rieske protein, while the 4 small subunits are PetG, PetL, PetM and PetN. The complex functions as a dimer.

The protein localises to the plastid. It localises to the chloroplast thylakoid membrane. In terms of biological role, component of the cytochrome b6-f complex, which mediates electron transfer between photosystem II (PSII) and photosystem I (PSI), cyclic electron flow around PSI, and state transitions. The chain is Cytochrome b6-f complex subunit 8 from Chloranthus spicatus (Chulantree).